The primary structure comprises 361 residues: Chorismate synthase (361 aa).

NADP(+) contacts are provided by R48 and R54. Residues 125–127, 238–239, G278, 293–297, and R319 each bind FMN; these read RSS, NA, and KPTSS.

The protein belongs to the chorismate synthase family. Homotetramer. FMNH2 is required as a cofactor.

It catalyses the reaction 5-O-(1-carboxyvinyl)-3-phosphoshikimate = chorismate + phosphate. It functions in the pathway metabolic intermediate biosynthesis; chorismate biosynthesis; chorismate from D-erythrose 4-phosphate and phosphoenolpyruvate: step 7/7. In terms of biological role, catalyzes the anti-1,4-elimination of the C-3 phosphate and the C-6 proR hydrogen from 5-enolpyruvylshikimate-3-phosphate (EPSP) to yield chorismate, which is the branch point compound that serves as the starting substrate for the three terminal pathways of aromatic amino acid biosynthesis. This reaction introduces a second double bond into the aromatic ring system. The chain is Chorismate synthase from Proteus mirabilis (strain HI4320).